Consider the following 124-residue polypeptide: Small ribosomal subunit protein uS12 (124 aa).

The interval 1-25 (MATINQLVRKPRQASTYKSASPALD) is disordered.

Belongs to the universal ribosomal protein uS12 family. As to quaternary structure, part of the 30S ribosomal subunit. Contacts proteins S8 and S17. May interact with IF1 in the 30S initiation complex.

Functionally, with S4 and S5 plays an important role in translational accuracy. In terms of biological role, interacts with and stabilizes bases of the 16S rRNA that are involved in tRNA selection in the A site and with the mRNA backbone. Located at the interface of the 30S and 50S subunits, it traverses the body of the 30S subunit contacting proteins on the other side and probably holding the rRNA structure together. The combined cluster of proteins S8, S12 and S17 appears to hold together the shoulder and platform of the 30S subunit. The protein is Small ribosomal subunit protein uS12 of Xylella fastidiosa (strain 9a5c).